Consider the following 683-residue polypeptide: Methionine--tRNA ligase (683 aa).

Positions 15 to 25 match the 'HIGH' region motif; sequence PYANGPIHLGH. Residues cysteine 146, cysteine 149, cysteine 159, and cysteine 162 each coordinate Zn(2+). The short motif at 332–336 is the 'KMSKS' region element; the sequence is KMSKS. Lysine 335 lines the ATP pocket. The tRNA-binding domain maps to 581-683; the sequence is DFCKVDLRVA…AGAKAGQRVK (103 aa).

Belongs to the class-I aminoacyl-tRNA synthetase family. MetG type 1 subfamily. As to quaternary structure, homodimer. It depends on Zn(2+) as a cofactor.

Its subcellular location is the cytoplasm. The catalysed reaction is tRNA(Met) + L-methionine + ATP = L-methionyl-tRNA(Met) + AMP + diphosphate. Its function is as follows. Is required not only for elongation of protein synthesis but also for the initiation of all mRNA translation through initiator tRNA(fMet) aminoacylation. This is Methionine--tRNA ligase from Histophilus somni (strain 2336) (Haemophilus somnus).